Here is a 300-residue protein sequence, read N- to C-terminus: Auxin-responsive protein IAA7 (300 aa).

Disordered regions lie at residues 1 to 80 (MGEA…DGDK) and 92 to 125 (VSHS…LASN). Residues 43 to 47 (LSLGL) carry the EAR-like (transcriptional repression) motif. Positions 92 to 103 (VSHSQGKANKNK) are enriched in polar residues. A PB1 domain is found at 177–281 (APFIKINMDG…SVKRLRVLKT (105 aa)).

Belongs to the Aux/IAA family. Homodimers and heterodimers. As to expression, expressed at low levels in roots and shoots.

The protein resides in the nucleus. In terms of biological role, aux/IAA proteins are short-lived transcriptional factors that function as repressors of early auxin response genes at low auxin concentrations. This chain is Auxin-responsive protein IAA7 (IAA7), found in Oryza sativa subsp. japonica (Rice).